The primary structure comprises 72 residues: Translation initiation factor IF-1 (72 aa).

The region spanning 2-72 is the S1-like domain; that stretch reads AKEDCIEMQG…NKGRIIFRSR (71 aa).

It belongs to the IF-1 family. As to quaternary structure, component of the 30S ribosomal translation pre-initiation complex which assembles on the 30S ribosome in the order IF-2 and IF-3, IF-1 and N-formylmethionyl-tRNA(fMet); mRNA recruitment can occur at any time during PIC assembly.

It is found in the cytoplasm. One of the essential components for the initiation of protein synthesis. Stabilizes the binding of IF-2 and IF-3 on the 30S subunit to which N-formylmethionyl-tRNA(fMet) subsequently binds. Helps modulate mRNA selection, yielding the 30S pre-initiation complex (PIC). Upon addition of the 50S ribosomal subunit IF-1, IF-2 and IF-3 are released leaving the mature 70S translation initiation complex. This chain is Translation initiation factor IF-1, found in Pasteurella multocida (strain Pm70).